The chain runs to 364 residues: F-box/LRR-repeat protein At1g55660 (364 aa).

Residues 52–98 enclose the F-box domain; the sequence is MDKISQLPDELLVKVLSFLSTKDAVSTSILSMRWKSLWMWLPKLEYN. LRR repeat units lie at residues 158 to 179, 185 to 206, 207 to 228, 233 to 254, 256 to 277, and 279 to 300; these read NVRE…LPKS, SIVI…VCLP, SLKT…HRLL, VLED…SVIV, SLQR…KMNS, and SLKY…ESDS.

This Arabidopsis thaliana (Mouse-ear cress) protein is F-box/LRR-repeat protein At1g55660.